The following is a 431-amino-acid chain: RbAp48-related WD40 repeat-containing protein prw1 (431 aa).

WD repeat units lie at residues 127–159, 182–213, 232–263, 279–310, 323–354, and 380–411; these read SHPE…LVFD, KHTQ…SCWD, SHEK…HVHD, AHSG…ALWD, GHED…LVWD, and GHTS…QIWT.

Belongs to the WD repeat HIR1 family. In terms of assembly, heterotetramer of alp13, clr6, prw1 and pst2.

The protein resides in the nucleus. Functionally, has a role in chromatin assembly and chromosome segregation. Involved in the deacetylation of histones. The chain is RbAp48-related WD40 repeat-containing protein prw1 (prw1) from Schizosaccharomyces pombe (strain 972 / ATCC 24843) (Fission yeast).